Reading from the N-terminus, the 240-residue chain is tRNA (guanine-N(1)-)-methyltransferase (240 aa).

Residues glycine 110 and 129 to 134 (LGDFVL) contribute to the S-adenosyl-L-methionine site.

This sequence belongs to the RNA methyltransferase TrmD family. In terms of assembly, homodimer.

It is found in the cytoplasm. It catalyses the reaction guanosine(37) in tRNA + S-adenosyl-L-methionine = N(1)-methylguanosine(37) in tRNA + S-adenosyl-L-homocysteine + H(+). Functionally, specifically methylates guanosine-37 in various tRNAs. This is tRNA (guanine-N(1)-)-methyltransferase from Clostridium botulinum (strain ATCC 19397 / Type A).